Consider the following 91-residue polypeptide: Small ribosomal subunit protein bS6 (91 aa).

The protein belongs to the bacterial ribosomal protein bS6 family.

In terms of biological role, binds together with bS18 to 16S ribosomal RNA. The chain is Small ribosomal subunit protein bS6 from Leptospira borgpetersenii serovar Hardjo-bovis (strain JB197).